The sequence spans 159 residues: Style cell-cycle inhibitor 1 (159 aa).

Residues 1-86 (MVSERSSKEK…SDHKLKEGIP (86 aa)) are disordered. Over residues 15-50 (ARSEDSSSSDYEEKVKRHRGTEKDDERRSRRSDKKD) the composition is skewed to basic and acidic residues. Residues 51–63 (KKSHKHHKSSTSK) are compositionally biased toward basic residues. Residues 64 to 85 (KSKDDKPKKKHTESDHKLKEGI) show a composition bias toward basic and acidic residues.

It localises to the nucleus. Functionally, component of the auxin signaling transduction pathway that regulates cell proliferation and differentiation during flowers stigmas and styles development. Involved in the regulation of auxin-related genes. This chain is Style cell-cycle inhibitor 1, found in Arabidopsis thaliana (Mouse-ear cress).